The following is a 59-amino-acid chain: Large ribosomal subunit protein uL30 (59 aa).

This sequence belongs to the universal ribosomal protein uL30 family. As to quaternary structure, part of the 50S ribosomal subunit.

The chain is Large ribosomal subunit protein uL30 from Alkaliphilus metalliredigens (strain QYMF).